We begin with the raw amino-acid sequence, 147 residues long: Large ribosomal subunit protein uL13 (147 aa).

This sequence belongs to the universal ribosomal protein uL13 family. As to quaternary structure, part of the 50S ribosomal subunit.

In terms of biological role, this protein is one of the early assembly proteins of the 50S ribosomal subunit, although it is not seen to bind rRNA by itself. It is important during the early stages of 50S assembly. This chain is Large ribosomal subunit protein uL13, found in Rhodococcus jostii (strain RHA1).